The following is a 405-amino-acid chain: MTVTPHLFIPGPTNIPDAVRMAMNIPMEDMRSPEFPKFTLPLFEDLKKAFKMKDGRVFIFPSSGTGAWESAVENTLATGDKVLMSRFGQFSLLWVDMCERLGLKVEVCDEEWGTGVPVEKYADILAKDKNHEIKAVFVTHNETATGVSSDVAGVRKALDAAKHPALLMVDGVSSVGSLDMRMGEWGVDCCVSGSQKGFMLPTGLGILAVSQKALDINKSKNGRMNRCFFSFEDMIKTNDQGFFPYTPATQLLRGLRTSLDLLFAEGLDNVFARHTRLASGVRAAVDAWGLKLCAKEPKWYSDTVSAILVPEGIDSNAITKTAYYRYNTSFGLGLNKVAGKVFRIGHLGMLDEVMIGGALFAAEMALKDNGVNLKLGSGTGAAAEYFSKNATKSATALTPKQAKAA.

At Lys-196 the chain carries N6-(pyridoxal phosphate)lysine.

This sequence belongs to the class-V pyridoxal-phosphate-dependent aminotransferase family. Pyridoxal 5'-phosphate serves as cofactor.

The catalysed reaction is glyoxylate + L-serine = 3-hydroxypyruvate + glycine. It participates in one-carbon metabolism; formaldehyde assimilation via serine pathway. This chain is Serine--glyoxylate aminotransferase (sgaA), found in Hyphomicrobium methylovorum.